The chain runs to 429 residues: Zinc finger protein 275 (429 aa).

Positions V31–L95 are disordered. The span at P34–R51 shows a compositional bias: polar residues. Phosphoserine is present on S76. Residues F79 to R89 are compositionally biased toward basic and acidic residues. 2 consecutive C2H2-type zinc fingers follow at residues F101–H123 and W129–H151. A disordered region spans residues K149–R176. Positions A167–R176 are enriched in basic and acidic residues. C2H2-type zinc fingers lie at residues F181–H203, F209–H231, F237–H259, F265–H287, Y293–H315, Y321–H343, Y349–H371, Y377–H399, and C405–H427.

It belongs to the krueppel C2H2-type zinc-finger protein family.

The protein localises to the nucleus. Functionally, may be involved in transcriptional regulation. The polypeptide is Zinc finger protein 275 (ZNF275) (Homo sapiens (Human)).